A 216-amino-acid chain; its full sequence is MRIGILGGTFDPIHYGHIRPAIEVKHALALDKILLMPNHIPPHKQQPNLTTAQRLKMVADVCSQLDGFELCDIEAKRDTPSYTVVTLEQLKSLHPEHELFFIMGMDSFLQLKSWYEWQRLFDFAHLVVCQRPGWQLDAAHPMQQILTARSHAHQETHEGHAKNTHKNSGQIFPVTITPQDISSTQIREQLAKGEIPVDLLMPVTLDYIQNQQLYLP.

Belongs to the NadD family.

The catalysed reaction is nicotinate beta-D-ribonucleotide + ATP + H(+) = deamido-NAD(+) + diphosphate. It participates in cofactor biosynthesis; NAD(+) biosynthesis; deamido-NAD(+) from nicotinate D-ribonucleotide: step 1/1. In terms of biological role, catalyzes the reversible adenylation of nicotinate mononucleotide (NaMN) to nicotinic acid adenine dinucleotide (NaAD). The sequence is that of Probable nicotinate-nucleotide adenylyltransferase from Shewanella baltica (strain OS195).